Consider the following 93-residue polypeptide: Large ribosomal subunit protein uL23cz/uL23cy (93 aa).

Belongs to the universal ribosomal protein uL23 family. In terms of assembly, part of the 50S ribosomal subunit.

It localises to the plastid. Its subcellular location is the chloroplast. Its function is as follows. Binds to 23S rRNA. This Oenothera elata subsp. hookeri (Hooker's evening primrose) protein is Large ribosomal subunit protein uL23cz/uL23cy (rpl23-A).